A 297-amino-acid polypeptide reads, in one-letter code: Putative phosphate permease MJ0630 (297 aa).

Transmembrane regions (helical) follow at residues 2 to 22, 45 to 65, 67 to 87, 99 to 119, 121 to 141, 154 to 174, 180 to 200, 225 to 245, and 274 to 294; these read ITIE…LFIL, LLIL…NVGS, VNSL…VMTL, TVII…YVFG, ILLS…ILYS, ITMI…NLGS, VLGT…FLCL, FIAQ…GMPV, and NIIF…FIIN.

Belongs to the inorganic phosphate transporter (PiT) (TC 2.A.20) family.

The protein localises to the cell membrane. In terms of biological role, potential transporter for phosphate. In Methanocaldococcus jannaschii (strain ATCC 43067 / DSM 2661 / JAL-1 / JCM 10045 / NBRC 100440) (Methanococcus jannaschii), this protein is Putative phosphate permease MJ0630.